The sequence spans 441 residues: Glutamate--tRNA ligase 2 (441 aa).

The 'HIGH' region motif lies at 9-19 (PSPTGYIHVGN). A 'KMSKS' region motif is present at residues 239–243 (ALSKR). Residue Lys-242 coordinates ATP.

This sequence belongs to the class-I aminoacyl-tRNA synthetase family. Glutamate--tRNA ligase type 1 subfamily. In terms of assembly, monomer.

The protein localises to the cytoplasm. It carries out the reaction tRNA(Glu) + L-glutamate + ATP = L-glutamyl-tRNA(Glu) + AMP + diphosphate. Catalyzes the attachment of glutamate to tRNA(Glu) in a two-step reaction: glutamate is first activated by ATP to form Glu-AMP and then transferred to the acceptor end of tRNA(Glu). This Cereibacter sphaeroides (strain ATCC 17023 / DSM 158 / JCM 6121 / CCUG 31486 / LMG 2827 / NBRC 12203 / NCIMB 8253 / ATH 2.4.1.) (Rhodobacter sphaeroides) protein is Glutamate--tRNA ligase 2.